Here is a 211-residue protein sequence, read N- to C-terminus: MTGDHIKVIYFNGRGRAESIRMTLVAAGVNYEDERISFQDWPKIKPTIPGGRLPAVKITDNHGHVKWMVESLAIARYMAKKHHMMGGTEEEYYNVEKLIGQAEDLEHEYYKTLMKPEEEKQKIIKEILNGKVPVLLDIICESLKASTGKLAVGDKVTLADLVLIAVIDHVTDLDKEFLTGKYPEIHKHRENLLASSPRLAKYLSDRAATPF.

A GST N-terminal domain is found at 4 to 86 (DHIKVIYFNG…YMAKKHHMMG (83 aa)). Residues Tyr-10, Arg-16, Trp-41, Lys-45, Leu-53, Glu-70, Ser-71, and Asp-104 each contribute to the glutathione site. One can recognise a GST C-terminal domain in the interval 88–211 (TEEEYYNVEK…YLSDRAATPF (124 aa)).

Belongs to the GST superfamily. Mu family. Homodimer.

The enzyme catalyses RX + glutathione = an S-substituted glutathione + a halide anion + H(+). Its function is as follows. Conjugation of reduced glutathione to a wide number of exogenous and endogenous hydrophobic electrophiles. In terms of biological role, GST isoenzymes appear to play a central role in the parasite detoxification system. Other functions are also suspected including a role in increasing the solubility of haematin in the parasite gut. The sequence is that of Glutathione S-transferase class-mu 28 kDa isozyme from Schistosoma haematobium (Blood fluke).